The sequence spans 472 residues: Lycopene beta cyclase, chloroplastic (472 aa).

The N-terminal 25 residues, 1-25 (MDALLTSPFIPLKKPSHNRKSNTTT), are a transit peptide targeting the chloroplast. The tract at residues 1–27 (MDALLTSPFIPLKKPSHNRKSNTTTAS) is disordered. 62–90 (LAVVGGGPAGLAVAKRVSDAGLSVCSIDP) contributes to the NAD(+) binding site.

The protein belongs to the lycopene cyclase family. As to expression, expressed in flower buds and lips. Detected in roots and leaves.

It is found in the plastid. The protein resides in the chloroplast. It carries out the reaction a carotenoid psi-end group = a carotenoid beta-end derivative. It functions in the pathway carotenoid biosynthesis; beta-carotene biosynthesis. It participates in carotenoid biosynthesis; beta-zeacarotene biosynthesis. Its function is as follows. Catalyzes the double cyclization reaction which converts lycopene to beta-carotene and neurosporene to beta-zeacarotene. The sequence is that of Lycopene beta cyclase, chloroplastic (LCY-B) from Oncidium hybrid cultivar (Orchid).